Here is a 532-residue protein sequence, read N- to C-terminus: Light-independent protochlorophyllide reductase subunit B (532 aa).

D36 provides a ligand contact to [4Fe-4S] cluster. D282 serves as the catalytic Proton donor. 417–418 (GL) lines the substrate pocket.

Belongs to the ChlB/BchB/BchZ family. Protochlorophyllide reductase is composed of three subunits; BchL, BchN and BchB. Forms a heterotetramer of two BchB and two BchN subunits. The cofactor is [4Fe-4S] cluster.

The catalysed reaction is chlorophyllide a + oxidized 2[4Fe-4S]-[ferredoxin] + 2 ADP + 2 phosphate = protochlorophyllide a + reduced 2[4Fe-4S]-[ferredoxin] + 2 ATP + 2 H2O. The protein operates within porphyrin-containing compound metabolism; bacteriochlorophyll biosynthesis (light-independent). Functionally, component of the dark-operative protochlorophyllide reductase (DPOR) that uses Mg-ATP and reduced ferredoxin to reduce ring D of protochlorophyllide (Pchlide) to form chlorophyllide a (Chlide). This reaction is light-independent. The NB-protein (BchN-BchB) is the catalytic component of the complex. The chain is Light-independent protochlorophyllide reductase subunit B from Methylobacterium radiotolerans (strain ATCC 27329 / DSM 1819 / JCM 2831 / NBRC 15690 / NCIMB 10815 / 0-1).